Consider the following 192-residue polypeptide: Superoxide dismutase [Fe] (192 aa).

4 residues coordinate Fe cation: H26, H73, D157, and H161.

This sequence belongs to the iron/manganese superoxide dismutase family. Homodimer. Requires Fe cation as cofactor.

It catalyses the reaction 2 superoxide + 2 H(+) = H2O2 + O2. Functionally, destroys superoxide anion radicals which are normally produced within the cells and which are toxic to biological systems. The sequence is that of Superoxide dismutase [Fe] from Pseudoalteromonas translucida (strain TAC 125).